Here is a 553-residue protein sequence, read N- to C-terminus: Coiled-coil domain-containing protein 22 homolog (553 aa).

2 coiled-coil regions span residues 261–404 (LEEL…TATQ) and 498–553 (NVTK…VAKA).

The protein belongs to the CCDC22 family.

The sequence is that of Coiled-coil domain-containing protein 22 homolog from Drosophila pseudoobscura pseudoobscura (Fruit fly).